The primary structure comprises 121 residues: Large ribosomal subunit protein uL18 (121 aa).

This sequence belongs to the universal ribosomal protein uL18 family. As to quaternary structure, part of the 50S ribosomal subunit; part of the 5S rRNA/L5/L18/L25 subcomplex. Contacts the 5S and 23S rRNAs.

This is one of the proteins that bind and probably mediate the attachment of the 5S RNA into the large ribosomal subunit, where it forms part of the central protuberance. This is Large ribosomal subunit protein uL18 from Ehrlichia canis (strain Jake).